We begin with the raw amino-acid sequence, 324 residues long: NADH-quinone oxidoreductase subunit H 2 (324 aa).

9 helical membrane passes run 1 to 21, 77 to 97, 109 to 129, 147 to 167, 179 to 199, 214 to 234, 238 to 258, 263 to 283, and 298 to 318; these read MIGM…LLVV, ILAP…VAFG, VMFL…GALA, LGYE…AGSL, VWFV…GVAA, LVAG…FLGE, VLLV…GPVW, LPGP…FIWI, and FAWK…GLIV.

Belongs to the complex I subunit 1 family. NDH-1 is composed of 14 different subunits. Subunits NuoA, H, J, K, L, M, N constitute the membrane sector of the complex.

Its subcellular location is the cell inner membrane. The enzyme catalyses a quinone + NADH + 5 H(+)(in) = a quinol + NAD(+) + 4 H(+)(out). Functionally, NDH-1 shuttles electrons from NADH, via FMN and iron-sulfur (Fe-S) centers, to quinones in the respiratory chain. The immediate electron acceptor for the enzyme in this species is believed to be ubiquinone. Couples the redox reaction to proton translocation (for every two electrons transferred, four hydrogen ions are translocated across the cytoplasmic membrane), and thus conserves the redox energy in a proton gradient. This subunit may bind ubiquinone. This Rhodopseudomonas palustris (strain BisB18) protein is NADH-quinone oxidoreductase subunit H 2.